The primary structure comprises 352 residues: PDZ and LIM domain protein 2 (352 aa).

Residues 1-84 (MALTVDVAGP…PLRLQLDRSQ (84 aa)) enclose the PDZ domain. Disordered stretches follow at residues 69–95 (IRQSPSPLRLQLDRSQAASPGQTNGDS) and 108–141 (VRTHTESHSSLRSSYSSPTSLSPRAGSPFSPPPF). Positions 81–95 (DRSQAASPGQTNGDS) are enriched in polar residues. Over residues 117–135 (SLRSSYSSPTSLSPRAGSP) the composition is skewed to low complexity. S124 carries the post-translational modification Phosphoserine. Phosphothreonine is present on T126. A phosphoserine mark is found at S127, S129, S134, S137, S143, S161, S197, S203, S213, and S266. Disordered regions lie at residues 170–214 (LSYS…GGSL) and 253–275 (ERGGTPAFLPSSLSPQSSLPASR). Over residues 258 to 275 (PAFLPSSLSPQSSLPASR) the composition is skewed to low complexity. An LIM zinc-binding domain is found at 284-344 (HTCEKCSTSI…EKHARQRYSA (61 aa)).

In terms of assembly, interacts with alpha-actinins ACTN1 and ACTN4, FLNA and MYH9. Interacts (via LIM zinc-binding domain) with MKRN2.

The protein localises to the cytoplasm. It localises to the cytoskeleton. Its function is as follows. Probable adapter protein located at the actin cytoskeleton that promotes cell attachment. Necessary for the migratory capacity of epithelial cells. Overexpression enhances cell adhesion to collagen and fibronectin and suppresses anchorage independent growth. May contribute to tumor cell migratory capacity. The protein is PDZ and LIM domain protein 2 (PDLIM2) of Macaca fascicularis (Crab-eating macaque).